The primary structure comprises 161 residues: RNA pyrophosphohydrolase (161 aa).

The 144-residue stretch at G6 to R149 folds into the Nudix hydrolase domain. Positions G38–G59 match the Nudix box motif.

The protein belongs to the Nudix hydrolase family. RppH subfamily. A divalent metal cation serves as cofactor.

In terms of biological role, accelerates the degradation of transcripts by removing pyrophosphate from the 5'-end of triphosphorylated RNA, leading to a more labile monophosphorylated state that can stimulate subsequent ribonuclease cleavage. The polypeptide is RNA pyrophosphohydrolase (Hahella chejuensis (strain KCTC 2396)).